Consider the following 163-residue polypeptide: Crossover junction endodeoxyribonuclease RuvC (163 aa).

Catalysis depends on residues Asp-9, Glu-76, and Asp-148. Mg(2+) is bound by residues Asp-9, Glu-76, and Asp-148.

The protein belongs to the RuvC family. Homodimer which binds Holliday junction (HJ) DNA. The HJ becomes 2-fold symmetrical on binding to RuvC with unstacked arms; it has a different conformation from HJ DNA in complex with RuvA. In the full resolvosome a probable DNA-RuvA(4)-RuvB(12)-RuvC(2) complex forms which resolves the HJ. It depends on Mg(2+) as a cofactor.

Its subcellular location is the cytoplasm. The catalysed reaction is Endonucleolytic cleavage at a junction such as a reciprocal single-stranded crossover between two homologous DNA duplexes (Holliday junction).. In terms of biological role, the RuvA-RuvB-RuvC complex processes Holliday junction (HJ) DNA during genetic recombination and DNA repair. Endonuclease that resolves HJ intermediates. Cleaves cruciform DNA by making single-stranded nicks across the HJ at symmetrical positions within the homologous arms, yielding a 5'-phosphate and a 3'-hydroxyl group; requires a central core of homology in the junction. The consensus cleavage sequence is 5'-(A/T)TT(C/G)-3'. Cleavage occurs on the 3'-side of the TT dinucleotide at the point of strand exchange. HJ branch migration catalyzed by RuvA-RuvB allows RuvC to scan DNA until it finds its consensus sequence, where it cleaves and resolves the cruciform DNA. The sequence is that of Crossover junction endodeoxyribonuclease RuvC from Nostoc punctiforme (strain ATCC 29133 / PCC 73102).